The primary structure comprises 578 residues: MKYILVTGGVISGVGKGIIASSIGTILKSCGLRVTAIKIDPYINIDAGTFSPYEHGEVFVLNDGGEVDLDLGNYERFLDINLYKDNNITTGKIYQQVINRERRGDYLGKTVQVVPHITDAIQEWVLNQAKVPVDRDQKEPQICVIELGGTIGDIEGMPFIEAFRQFQFKAKRENFCNIHVSLVPQPSATGEQKTKPTQNSVRALRGLGLSPDLIVCRSAKPIEMAVKQKISMFCHVEPEQVIFVHDVSSTYRVPILLQEQGIIKYFKQRLSIPIEDQPSTQLFKWKRMADRYERLLKTCSIALVGKYTKLSDCYTSVFKALEHSALAINHKLNLMYIDSADLEPSMKAQDPVKYHKAWEELCKAEGILVPGGFGLRGTEGKIQAITWARERKIPFLGICLGMQLAVVEFARNILKMTDANSTEFDPNTKNPAVIDMPEHHPGDMGGTMRLGSRKTVFKTSESVVKKLYDNQDFVEERHRHRYEVNPELVQQFEEKGLKFVGQDNEGQRMEIIELEGHPYFVGVQFHPEFCSRPMKPSPPYLGFMLAASGKLNTYVQNGCKLSPRNSYSEHSDESSSDS.

The region spanning 300 to 553 is the Glutamine amidotransferase type-1 domain; sequence SIALVGKYTK…MLAASGKLNT (254 aa). Active-site for GATase activity residues include Cys-399, His-526, and Glu-528.

The protein belongs to the CTP synthase family.

The catalysed reaction is UTP + L-glutamine + ATP + H2O = CTP + L-glutamate + ADP + phosphate + 2 H(+). Its pathway is pyrimidine metabolism; CTP biosynthesis via de novo pathway; CTP from UDP: step 2/2. Catalyzes the ATP-dependent amination of UTP to CTP with either L-glutamine or ammonia as the source of nitrogen. Constitutes the rate-limiting enzyme in the synthesis of cytosine nucleotides. In Xenopus laevis (African clawed frog), this protein is CTP synthase 2 (ctps2).